The chain runs to 644 residues: Low affinity sulfate transporter 3 (644 aa).

The segment covering 1 to 19 (MSSLGTEQFSERSQWVLNS) has biased composition (polar residues). The tract at residues 1–20 (MSSLGTEQFSERSQWVLNSP) is disordered. 13 consecutive transmembrane segments (helical) span residues 50 to 70 (AVSF…YSAT), 76 to 96 (LLSG…YANL), 99 to 119 (LDPQ…ALMG), 124 to 144 (IAIG…PKVI), 156 to 176 (LVFT…VLRL), 179 to 199 (LVDF…AIVI), 242 to 262 (PLNF…RFIG), 268 to 288 (FFWL…LIVF), 328 to 348 (IGLI…RSFA), 394 to 414 (CKTA…LELF), 418 to 438 (LYYT…PGLI), 455 to 475 (LACL…GLLI), and 518 to 538 (PGIL…AGFV). The 125-residue stretch at 511–635 (YPMAVTTPGI…LTVAEAVDAC (125 aa)) folds into the STAS domain.

It belongs to the SLC26A/SulP transporter (TC 2.A.53) family.

Its subcellular location is the membrane. In terms of biological role, low-affinity H(+)/sulfate cotransporter which may be involved in the internal transport of sulfate between cellular or subcellular compartments within the plant. In Stylosanthes hamata (Caribbean stylo), this protein is Low affinity sulfate transporter 3 (ST3).